A 159-amino-acid polypeptide reads, in one-letter code: Cytochrome c nitrite reductase subunit NrfH (159 aa).

At 2-14 (SEEKSRNGPARLK) the chain is on the cytoplasmic side. A helical; Signal-anchor for type II membrane protein membrane pass occupies residues 15-33 (LVLGGATLGVVALATVAFG). Topologically, residues 34 to 159 (MKYTDQRPFC…PISTREVADE (126 aa)) are periplasmic. Heme-binding residues include cysteine 43, cysteine 46, methionine 49, histidine 61, and cysteine 66. Residue asparagine 67 participates in a menaquinol binding. Residues cysteine 69 and histidine 70 each coordinate heme. 2 residues coordinate a menaquinol: lysine 82 and aspartate 89. Residue aspartate 89 participates in heme binding. The tract at residues 99–100 (GD) is interaction with NrfA. Heme contacts are provided by cysteine 116, cysteine 119, histidine 120, cysteine 136, cysteine 139, histidine 140, and histidine 145. The tract at residues 123-158 (TNVEVASMEAKKYCTDCHRNVQHMRMKPISTREVAD) is interaction with NrfA.

The protein belongs to the NapC/NirT/NrfH family. As to quaternary structure, component of the NrfHA cytochrome c nitrite reductase complex composed of 4 NrfA catalytic subunits and 2 NrfH quinone-binding subunits. Interacts with NrfA homodimer. Heme is required as a cofactor.

It localises to the cell inner membrane. Electron donor subunit of the cytochrome c nitrite reductase holocomplex NrfHA. Acquires electrons from the menaquinone pool and mediates their transfer to the catalytic subunit NrfA in an anaerobic respiratory process of nitrite. The other biological function of the NrfHA holocomplex is to detoxify nitrite. This function is essential for the survival of this organism as it enables it to overcome inhibition by nitrite, which is produced by other organisms living in the same environment. This chain is Cytochrome c nitrite reductase subunit NrfH, found in Nitratidesulfovibrio vulgaris (strain ATCC 29579 / DSM 644 / CCUG 34227 / NCIMB 8303 / VKM B-1760 / Hildenborough) (Desulfovibrio vulgaris).